We begin with the raw amino-acid sequence, 52 residues long: UPF0391 membrane protein XOO4217 (52 aa).

The next 2 helical transmembrane spans lie at 5-25 (AMIFFVIAIIAAVLGFSGIAG) and 27-47 (ATNIAWILFVVFLILAVISMF).

It belongs to the UPF0391 family.

The protein resides in the cell membrane. The protein is UPF0391 membrane protein XOO4217 of Xanthomonas oryzae pv. oryzae (strain KACC10331 / KXO85).